The following is a 393-amino-acid chain: SH3 domain-binding protein 5-like (393 aa).

The disordered stretch occupies residues 1 to 58; the sequence is MAELRQVPGGRETPQGELRPEVVEDEVPRSPVAEEPGGGGSSSSEAKLSPREEEELDP. At Thr-13 the chain carries Phosphothreonine. Positions 18–28 are enriched in basic and acidic residues; the sequence is LRPEVVEDEVP. Residues Ser-30 and Ser-49 each carry the phosphoserine modification. Coiled-coil stretches lie at residues 59-140 and 169-272; these read RIQE…YERA and WQEM…EQIH. The tract at residues 273-332 is disordered; that stretch reads ARRRGGLPPHPLGPRRSSPVGAEAGPEDMEDGDSGIEGAEGAGLEEGSSLGPGPAPDTDT. Residues 297 to 306 are compositionally biased toward acidic residues; sequence GPEDMEDGDS. Positions 317–332 are enriched in low complexity; the sequence is EEGSSLGPGPAPDTDT. Phosphoserine occurs at positions 343, 350, 358, 362, and 378. The interval 362–393 is disordered; the sequence is SLDGQELGTRSGGRRGSDGGARGGRHQRSVSL. The segment covering 384–393 has biased composition (basic residues); sequence GGRHQRSVSL.

This sequence belongs to the SH3BP5 family.

Its function is as follows. Functions as a guanine nucleotide exchange factor (GEF) for RAB11A. The protein is SH3 domain-binding protein 5-like (SH3BP5L) of Homo sapiens (Human).